We begin with the raw amino-acid sequence, 301 residues long: uncharacterized protein (301 aa).

Residues 1 to 58 (MDIRHLTYFLEVARLKSFTKASQSLYVSQPTISKMIKNLEEELGIELFYRNGRQVELT) enclose the HTH lysR-type domain. The H-T-H motif DNA-binding region spans 18-37 (FTKASQSLYVSQPTISKMIK).

It belongs to the LysR transcriptional regulatory family.

This is an uncharacterized protein from Bacillus subtilis (strain 168).